Consider the following 254-residue polypeptide: Transcription factor bHLH51 (254 aa).

Residues 62 to 111 form the bHLH domain; it reads SLSRSHRLAEKRRRDRINSHLTALRKLVPNSDKLDKAALLATVIEQVKEL.

In terms of assembly, homodimer. Expressed constitutively in roots, stems, and flowers.

The protein resides in the nucleus. This chain is Transcription factor bHLH51 (BHLH51), found in Arabidopsis thaliana (Mouse-ear cress).